A 310-amino-acid chain; its full sequence is tRNA-5-methyluridine(54) 2-sulfurtransferase (310 aa).

Cysteine 3, cysteine 6, cysteine 22, and histidine 25 together coordinate Zn(2+). Alanine 53 and isoleucine 79 together coordinate ATP. [4Fe-4S] cluster is bound by residues cysteine 128 and cysteine 131. An intrachain disulfide couples cysteine 128 to cysteine 220. ATP contacts are provided by lysine 135 and glycine 154. Cysteine 220 provides a ligand contact to [4Fe-4S] cluster. Zn(2+)-binding residues include cysteine 272, cysteine 275, cysteine 284, and cysteine 287.

The protein belongs to the TtcA family. TtuA subfamily. In terms of assembly, homodimer. Requires [4Fe-4S] cluster as cofactor. It depends on Mg(2+) as a cofactor.

The enzyme catalyses 5-methyluridine(54) in tRNA + hydrogen sulfide + ATP = 5-methyl-2-thiouridine(54) in tRNA + AMP + diphosphate. It functions in the pathway tRNA modification. Functionally, catalyzes the ATP-dependent 2-thiolation of 5-methyluridine residue at position 54 in the T loop of tRNAs, leading to 5-methyl-2-thiouridine (m(5)s(2)U or s(2)T). This modification allows thermal stabilization of tRNAs in thermophilic microorganisms, and is required for cell growth at high temperatures. Can use free sulfide as sulfur source in vitro, which may be also the sulfur source in vivo. The sequence is that of tRNA-5-methyluridine(54) 2-sulfurtransferase from Pyrococcus horikoshii (strain ATCC 700860 / DSM 12428 / JCM 9974 / NBRC 100139 / OT-3).